A 161-amino-acid polypeptide reads, in one-letter code: MKISLISAISNNLVIGHNNKIPWYLPEDLKWFKKNTIHKDIIMGRLTWESILNHPLPMRKNIVISHKEIIHKDVIWANSISKALLSTTYDKEIMVIGGSKIYKQMLFYATKLYLTHVDFNGIGDTYFPQYKSCKFWKTIFRKQHFKDKNNPYNFCFEILSR.

Positions 2–161 (KISLISAISN…YNFCFEILSR (160 aa)) constitute a DHFR domain. 6 to 8 (ISA) is a substrate binding site. Residues 7–8 (SA) and 15–20 (IGHNNK) each bind NADP(+). Substrate is bound at residue aspartate 28. 44–47 (GRLT) is a binding site for NADP(+). Arginine 59 serves as a coordination point for substrate. Residues 64–66 (ISH) and 96–101 (IGGSKI) each bind NADP(+). Threonine 115 serves as a coordination point for substrate.

This sequence belongs to the dihydrofolate reductase family.

It catalyses the reaction (6S)-5,6,7,8-tetrahydrofolate + NADP(+) = 7,8-dihydrofolate + NADPH + H(+). It functions in the pathway cofactor biosynthesis; tetrahydrofolate biosynthesis; 5,6,7,8-tetrahydrofolate from 7,8-dihydrofolate: step 1/1. Key enzyme in folate metabolism. Catalyzes an essential reaction for de novo glycine and purine synthesis, and for DNA precursor synthesis. This Buchnera aphidicola subsp. Schizaphis graminum (strain Sg) protein is Dihydrofolate reductase (folA).